The chain runs to 146 residues: Hemoglobin subunit beta (146 aa).

In terms of domain architecture, Globin spans 2–146; it reads FLTAEEKGLV…VANALAHKYH (145 aa). Ser-44 bears the Phosphoserine mark. At Lys-59 the chain carries N6-acetyllysine. His-63 is a heme b binding site. Lys-82 is subject to N6-acetyllysine. His-92 is a binding site for heme b. Cys-93 carries the S-nitrosocysteine modification. At Lys-144 the chain carries N6-acetyllysine.

This sequence belongs to the globin family. As to quaternary structure, heterotetramer of two alpha chains and two beta chains. Red blood cells.

Involved in oxygen transport from the lung to the various peripheral tissues. The sequence is that of Hemoglobin subunit beta (HBB) from Lynx lynx (Eurasian lynx).